A 1392-amino-acid chain; its full sequence is ATP-dependent helicase/nuclease subunit A (1392 aa).

The 487-residue stretch at Asn3–Arg489 folds into the UvrD-like helicase ATP-binding domain. An ATP-binding site is contributed by Ala24 to Thr31. Disordered stretches follow at residues Arg291–Asp319, Lys555–Ala594, and Gly1051–Lys1126. Basic and acidic residues-rich tracts occupy residues Glu305–Asp319 and Ser567–Glu583. The UvrD-like helicase C-terminal domain occupies Arg556–Gly886. Over residues Ser584–Ala594 the composition is skewed to acidic residues. Residues Ala1088 to Leu1113 show a composition bias toward basic and acidic residues.

The protein belongs to the helicase family. AddA subfamily. As to quaternary structure, heterodimer of AddA and AddB/RexB. Mg(2+) is required as a cofactor.

It carries out the reaction Couples ATP hydrolysis with the unwinding of duplex DNA by translocating in the 3'-5' direction.. The enzyme catalyses ATP + H2O = ADP + phosphate + H(+). Its function is as follows. The heterodimer acts as both an ATP-dependent DNA helicase and an ATP-dependent, dual-direction single-stranded exonuclease. Recognizes the chi site generating a DNA molecule suitable for the initiation of homologous recombination. The AddA nuclease domain is required for chi fragment generation; this subunit has the helicase and 3' -&gt; 5' nuclease activities. The polypeptide is ATP-dependent helicase/nuclease subunit A (Desulfitobacterium hafniense (strain DSM 10664 / DCB-2)).